Reading from the N-terminus, the 298-residue chain is Inosose dehydratase (298 aa).

The protein belongs to the IolE/MocC family. The cofactor is glutathione. It depends on Co(2+) as a cofactor. Requires Mn(2+) as cofactor.

The catalysed reaction is scyllo-inosose = 3D-3,5/4-trihydroxycyclohexane-1,2-dione + H2O. In terms of biological role, catalyzes the dehydration of inosose (2-keto-myo-inositol, 2KMI or 2,4,6/3,5-pentahydroxycyclohexanone) to 3D-(3,5/4)-trihydroxycyclohexane-1,2-dione (D-2,3-diketo-4-deoxy-epi-inositol). The chain is Inosose dehydratase from Erwinia tasmaniensis (strain DSM 17950 / CFBP 7177 / CIP 109463 / NCPPB 4357 / Et1/99).